The chain runs to 854 residues: DNA mismatch repair protein MutS (854 aa).

An ATP-binding site is contributed by 608–615 (GPNMAGKS).

It belongs to the DNA mismatch repair MutS family.

This protein is involved in the repair of mismatches in DNA. It is possible that it carries out the mismatch recognition step. This protein has a weak ATPase activity. In Leuconostoc mesenteroides subsp. mesenteroides (strain ATCC 8293 / DSM 20343 / BCRC 11652 / CCM 1803 / JCM 6124 / NCDO 523 / NBRC 100496 / NCIMB 8023 / NCTC 12954 / NRRL B-1118 / 37Y), this protein is DNA mismatch repair protein MutS.